A 188-amino-acid polypeptide reads, in one-letter code: COMM domain-containing protein 1 (188 aa).

Residues 1–122 (MAGDLEGGKS…RWDNGLRGLS (122 aa)) form a sufficient for interaction with SLC12A2 region. Cu cation contacts are provided by H100, M109, and H133. One can recognise a COMM domain in the interval 117-185 (GLRGLSWRVD…EVEESINRLM (69 aa)). Positions 124-188 (RVDGKSQSRH…ESINRLMQAA (65 aa)) are required for binding to PtdIns(4,5)P2.

The protein belongs to the COMM domain-containing protein 1 family. In terms of assembly, component of the commander complex consisting of the CCC subcomplex and the retriever subcomplex. Component of the CCC (COMMD/CCDC22/CCDC93) subcomplex consisting of COMMD1, COMMD2, COMMD3, COMMD4, COMMD5, COMMD6, COMMD7, COMMD8, COMMD9, COMMD10, CCDC22 and CCDC93; within the complex forms a heterodimer with COMMD6. Interacts with VPS35L; the interaction associates the CCC complex with the retriever complex. Identified in a complex with an E3 ubiquitin ligase complex composed of TCEB1/elongin C, CUL2, SOCS1 and RBX1; in the complex interacts directly with SOCS1 and CUL2. Identified in a complex with NF-kappa-B. Interacts directly with SLC12A2. Interacts directly with ATP7B (via the N-terminal region). Interacts with ATP7A. Interacts with FAM107A; this interaction stabilizes COMMD1 in the nucleus. Interacts with CCS, CDKN2A, RELA, REL, RELB, NFKB1/p105, NFKB2/p100, NFKBIB, SCNN1D, SCNN1B, CFTR, CLU, SGK1, AKT1, CUL1, CUL2, CUL3, CUL4A, CUL4B, CUL5, CUL7, HIF1A. Ubiquitinated; undergoes both 'Lys-63'- and 'Lys-48'-linked polyubiquitination. Ubiquitinated by XIAP, leading to its proteasomal degradation.

Its subcellular location is the nucleus. It localises to the cytoplasm. The protein resides in the endosome membrane. It is found in the cytoplasmic vesicle. The protein localises to the early endosome. Its subcellular location is the recycling endosome. Its function is as follows. Scaffold protein in the commander complex that is essential for endosomal recycling of transmembrane cargos; the commander complex is composed of the CCC subcomplex and the retriever subcomplex. Can modulate activity of cullin-RING E3 ubiquitin ligase (CRL) complexes by displacing CAND1; in vitro promotes CRL E3 activity and dissociates CAND1 from CUL1 and CUL2. Promotes ubiquitination of NF-kappa-B subunit RELA and its subsequent proteasomal degradation. Down-regulates NF-kappa-B activity. Involved in the regulation of membrane expression and ubiquitination of SLC12A2. Modulates Na(+) transport in epithelial cells by regulation of apical cell surface expression of amiloride-sensitive sodium channel (ENaC) subunits and by promoting their ubiquitination presumably involving NEDD4L. Promotes the localization of SCNN1D to recycling endosomes. Promotes CFTR cell surface expression through regulation of its ubiquitination. Down-regulates SOD1 activity by interfering with its homodimerization. Plays a role in copper ion homeostasis. Involved in copper-dependent ATP7A trafficking between the trans-Golgi network and vesicles in the cell periphery; the function is proposed to depend on its association within the CCC complex and cooperation with the WASH complex on early endosomes. Can bind one copper ion per monomer. May function to facilitate biliary copper excretion within hepatocytes. Binds to phosphatidylinositol 4,5-bisphosphate (PtdIns(4,5)P2). Involved in the regulation of HIF1A-mediated transcription; competes with ARNT/Hif-1-beta for binding to HIF1A resulting in decreased DNA binding and impaired transcriptional activation by HIF-1. Negatively regulates neuroblastoma G1/S phase cell cycle progression and cell proliferation by stimulating ubiquitination of NF-kappa-B subunit RELA and NF-kappa-B degradation in a FAM107A- and actin-dependent manner. In Mus musculus (Mouse), this protein is COMM domain-containing protein 1 (Commd1).